The primary structure comprises 54 residues: Large ribosomal subunit protein bL33 (54 aa).

The protein belongs to the bacterial ribosomal protein bL33 family.

This chain is Large ribosomal subunit protein bL33, found in Corynebacterium urealyticum (strain ATCC 43042 / DSM 7109).